The primary structure comprises 481 residues: UDP-N-acetylmuramoyl-L-alanyl-D-glutamate--L-lysine ligase (481 aa).

Ser-42 is a binding site for UDP-N-acetyl-alpha-D-muramoyl-L-alanyl-D-glutamate. 118–124 (GTKGKTT) is an ATP binding site. Residues Gln-158, 160 to 161 (TT), Ser-187, and Arg-195 contribute to the UDP-N-acetyl-alpha-D-muramoyl-L-alanyl-D-glutamate site. N6-carboxylysine is present on Lys-229. Residues 404 to 407 (DDPN) carry the L-lysine recognition motif motif.

The protein belongs to the MurCDEF family. MurE subfamily. Post-translationally, carboxylation is probably crucial for Mg(2+) binding and, consequently, for the gamma-phosphate positioning of ATP.

It localises to the cytoplasm. It carries out the reaction UDP-N-acetyl-alpha-D-muramoyl-L-alanyl-D-glutamate + L-lysine + ATP = UDP-N-acetyl-alpha-D-muramoyl-L-alanyl-gamma-D-glutamyl-L-lysine + ADP + phosphate + H(+). It functions in the pathway cell wall biogenesis; peptidoglycan biosynthesis. Its function is as follows. Catalyzes the addition of L-lysine to the nucleotide precursor UDP-N-acetylmuramoyl-L-alanyl-D-glutamate (UMAG) in the biosynthesis of bacterial cell-wall peptidoglycan. The sequence is that of UDP-N-acetylmuramoyl-L-alanyl-D-glutamate--L-lysine ligase from Streptococcus pyogenes serotype M3 (strain SSI-1).